Consider the following 657-residue polypeptide: Glycogen debranching enzyme (657 aa).

The active-site Nucleophile is Asp-336. Glu-371 serves as the catalytic Proton donor. Positions 458–467 (NEANGEENRD) are enriched in basic and acidic residues. Positions 458–479 (NEANGEENRDGTNNNYSNNHGK) are disordered.

It belongs to the glycosyl hydrolase 13 family.

The enzyme catalyses Hydrolysis of (1-&gt;6)-alpha-D-glucosidic linkages to branches with degrees of polymerization of three or four glucose residues in limit dextrin.. Its pathway is glycan degradation; glycogen degradation. Removes maltotriose and maltotetraose chains that are attached by 1,6-alpha-linkage to the limit dextrin main chain, generating a debranched limit dextrin. The protein is Glycogen debranching enzyme of Shigella sonnei (strain Ss046).